The chain runs to 500 residues: Probable malate:quinone oxidoreductase (500 aa).

Belongs to the MQO family. FAD serves as cofactor.

The enzyme catalyses (S)-malate + a quinone = a quinol + oxaloacetate. It functions in the pathway carbohydrate metabolism; tricarboxylic acid cycle; oxaloacetate from (S)-malate (quinone route): step 1/1. This is Probable malate:quinone oxidoreductase from Bacillus cereus (strain AH187).